Consider the following 347-residue polypeptide: MKPLQQIHLTCRRIIRDVLQHKSFLPAFISTSCTCLSRKKKHNGYDEVNQAKYEGLVRTVTASRISPQTPDRLFEEDNFLFGKVVKSKTATQTPEPKAPQNWVPLSNPNKVSLPLEKTDFDLPLKISLPARNHMANGTIPSVTRILQQTMPMEQAFYLERWKQRMIMELGEQGFAEYTAALFSQGKQFHMQLEDLLLALDHGKKEEPEGSTGYLSSVQHVLTDIIGVKSLESAVHHSELQYLGLVDCVAEYRQKLCVIDWKTSEKPKPYIRDTFDNPLQIAAYIGAINHDNNYNFQVNCGLIVVAYKDGSPAHTHFMDTDLCLHFWNKWLLRLEEYKKKKEEKEKQQ.

Residues Asp-246, Asp-259, and Lys-261 contribute to the active site.

The protein belongs to the MGME1 family.

It is found in the mitochondrion. In terms of biological role, single-stranded DNA (ssDNA) metal-dependent exonuclease involved in mitochondrial genome maintenance. Has preference for 5'-3' exonuclease activity. Necessary for maintenance of proper 7S DNA levels. Probably involved in mitochondrial DNA (mtDNA) repair. Specifically binds 5-hydroxymethylcytosine (5hmC)-containing DNA in stem cells. The chain is Mitochondrial genome maintenance exonuclease 1 (mgme1) from Xenopus tropicalis (Western clawed frog).